We begin with the raw amino-acid sequence, 503 residues long: WAS/WASL-interacting protein family member 1 (503 aa).

Positions 1 to 14 are enriched in pro residues; the sequence is MPVPPPPAPPPPPT. The interval 1–503 is disordered; it reads MPVPPPPAPP…GAPPLPPIPR (503 aa). Over residues 21 to 31 the composition is skewed to polar residues; the sequence is EKPTLNKTEQA. The region spanning 32-49 is the WH2 domain; that stretch reads GRNALLSDISKGKKLKKT. Residue Arg-33 is modified to Asymmetric dimethylarginine. The segment at 45-48 is binds actin; the sequence is KLKK. Gly residues predominate over residues 65–104; it reads AGAGGGGGGFGGGGGFGGGGGGGGGGSFGGGGPPGLGGLF. A compositionally biased stretch (low complexity) spans 121–137; sequence SGGSRPPLLPPGGRSTS. An omega-N-methylarginine mark is found at Arg-125 and Arg-134. 4 stretches are compositionally biased toward pro residues: residues 141-154, 161-174, 182-191, and 204-223; these read FSPP…PVPS, PPEP…PPRP, SIPPPVPSTP, and PPVP…PPFP. Ser-142 is subject to Phosphoserine. Residue Ser-234 is modified to Phosphoserine. Residues 238-247 are compositionally biased toward low complexity; sequence SPLSSSSPFS. Composition is skewed to pro residues over residues 282 to 298 and 306 to 323; these read VPPP…PSTP and APPP…PLPP. Ser-340 bears the Phosphoserine mark. Phosphothreonine is present on Thr-345. Over residues 346–371 the composition is skewed to pro residues; sequence PPLPSPGRSGPLPPPPSERPPPPVRD. Ser-350 carries the post-translational modification Phosphoserine. XRSGPXPPXP motif repeat units follow at residues 352-361, 374-383, and 410-419; these read GRSGPLPPPP and PRSGPRPPLP. Pro residues predominate over residues 413 to 434; sequence GPRPPLPPDRPSAGAPPPPPPS. Residues 480-494 are compositionally biased toward basic and acidic residues; that stretch reads ARNESRSGSNRRERG.

This sequence belongs to the verprolin family. As to quaternary structure, binds to WAS, profilin and actin. Binds to WASL. Interacts with DBNL. Interacts with FNBP1L (via the SH3 domain). As to expression, highly expressed in peripheral blood mononuclear cells, spleen, placenta, small intestine, colon and thymus. Lower expression in ovary, heart, brain, lung, liver, skeletal muscle, kidney, pancreas, prostate and testis.

It localises to the cytoplasmic vesicle. The protein localises to the cytoplasm. Its subcellular location is the cytoskeleton. It is found in the cell projection. The protein resides in the ruffle. In terms of biological role, plays a role in the reorganization of the actin cytoskeleton. Contributes with NCK1 and GRB2 in the recruitment and activation of WASL. May participate in regulating the subcellular localization of WASL, resulting in the disassembly of stress fibers in favor of filopodia formation. Plays a role in the formation of cell ruffles. Plays an important role in the intracellular motility of vaccinia virus by functioning as an adapter for recruiting WASL to vaccinia virus. This Homo sapiens (Human) protein is WAS/WASL-interacting protein family member 1 (WIPF1).